Reading from the N-terminus, the 121-residue chain is uncharacterized protein (121 aa).

A helical transmembrane segment spans residues 9–29 (LTILIASIYIIFFVNAAPTLY). The tract at residues 91–121 (EELPTYPPTMTTPLETTPLDTSPPVLPSAIP) is disordered. Residues 98–113 (PTMTTPLETTPLDTSP) are compositionally biased toward low complexity.

It is found in the host membrane. This is an uncharacterized protein from Alcelaphine herpesvirus 1 (strain C500) (AlHV-1).